The following is a 217-amino-acid chain: Proteasome subunit beta type-6-A like protein (217 aa).

The propeptide at 1–16 is removed in mature form; it reads MERHLMDSQIKGVSTG. The active-site Nucleophile is the threonine 17.

It belongs to the peptidase T1B family. In terms of assembly, the 26S proteasome consists of a 20S proteasome core and two 19S regulatory subunits. The 20S proteasome core is composed of 28 subunits that are arranged in four stacked rings, resulting in a barrel-shaped structure. The two end rings are each formed by seven alpha subunits, and the two central rings are each formed by seven beta subunits. The catalytic chamber with the active sites is on the inside of the barrel.

Its subcellular location is the cytoplasm. The protein resides in the nucleus. The enzyme catalyses Cleavage of peptide bonds with very broad specificity.. Functionally, the proteasome is a multicatalytic proteinase complex which is characterized by its ability to cleave peptides with Arg, Phe, Tyr, Leu, and Glu adjacent to the leaving group at neutral or slightly basic pH. The proteasome has an ATP-dependent proteolytic activity. This subunit is involved in antigen processing to generate class I binding peptides. The chain is Proteasome subunit beta type-6-A like protein (psmb6l-a) from Salmo salar (Atlantic salmon).